The chain runs to 407 residues: Histone-lysine N-methyltransferase SUV39H2 (407 aa).

In terms of domain architecture, Chromo spans Tyr-43–Lys-101. Positions Thr-185–Gly-243 constitute a Pre-SET domain. Zn(2+) is bound by residues Cys-187, Cys-189, Cys-192, Cys-197, Cys-198, Cys-225, Cys-229, Cys-231, and Cys-235. One can recognise an SET domain in the interval Tyr-246–Gln-369. S-adenosyl-L-methionine contacts are provided by residues Arg-257–Trp-259, Tyr-300, and Asn-326–His-327. Cys-329, Cys-395, Cys-397, and Cys-402 together coordinate Zn(2+). The region spanning Ile-391 to Asn-407 is the Post-SET domain.

Belongs to the class V-like SAM-binding methyltransferase superfamily. Histone-lysine methyltransferase family. Suvar3-9 subfamily.

The protein localises to the nucleus. The protein resides in the chromosome. Its subcellular location is the centromere. It catalyses the reaction L-lysyl(9)-[histone H3] + 3 S-adenosyl-L-methionine = N(6),N(6),N(6)-trimethyl-L-lysyl(9)-[histone H3] + 3 S-adenosyl-L-homocysteine + 3 H(+). In terms of biological role, histone methyltransferase that specifically trimethylates 'Lys-9' of histone H3 using monomethylated H3 'Lys-9' as substrate. H3 'Lys-9' trimethylation represents a specific tag for epigenetic transcriptional repression by recruiting HP1 (CBX1, CBX3 and/or CBX5) proteins to methylated histones. Mainly functions in heterochromatin regions, thereby playing a central role in the establishment of constitutive heterochromatin at pericentric and telomere regions. H3 'Lys-9' trimethylation is also required to direct DNA methylation at pericentric repeats. SUV39H1 is targeted to histone H3 via its interaction with RB1 and is involved in many processes. This Gallus gallus (Chicken) protein is Histone-lysine N-methyltransferase SUV39H2 (SUV39H2).